The sequence spans 253 residues: Indole-3-glycerol phosphate synthase (253 aa).

Belongs to the TrpC family.

It catalyses the reaction 1-(2-carboxyphenylamino)-1-deoxy-D-ribulose 5-phosphate + H(+) = (1S,2R)-1-C-(indol-3-yl)glycerol 3-phosphate + CO2 + H2O. The protein operates within amino-acid biosynthesis; L-tryptophan biosynthesis; L-tryptophan from chorismate: step 4/5. The chain is Indole-3-glycerol phosphate synthase from Bacillus mycoides (strain KBAB4) (Bacillus weihenstephanensis).